Consider the following 394-residue polypeptide: MGMKHSSRCLLLRRKMAENAAESTEVNSPPSQPPQPVVPAKPVQCVHHVSTQPSCPGRGKMSKLLNPEEMTSRDYYFDSYAHFGIHEEMLKDEVRTLTYRNSMYHNKHVFKDKVVLDVGSGTGILSMFAAKAGAKKVFGIECSSISDYSEKIIKANHLDNIITIFKGKVEEVELPVEKVDIIISEWMGYCLFYESMLNTVIFARDKWLKPGGLMFPDRAALYVVAIEDRQYKDFKIHWWENVYGFDMTCIRDVAMKEPLVDIVDPKQVVTNACLIKEVDIYTVKTEELSFTSAFCLQIQRNDYVHALVTYFNIEFTKCHKKMGFSTAPDAPYTHWKQTVFYLEDYLTVRRGEEIYGTISMKPNAKNVRDLDFTVDLDFKGQLCETSVSNDYKMR.

Gly-2 carries the N-myristoyl glycine lipid modification. A disordered region spans residues 16–40 (MAENAAESTEVNSPPSQPPQPVVPA). Short sequence motifs (SH3-binding) lie at residues 29–42 (PPSQ…PAKP) and 53–58 (PSCPGR). The segment covering 30 to 39 (PSQPPQPVVP) has biased composition (pro residues). At Arg-58 the chain carries Omega-N-methylarginine; by autocatalysis. Arg-73 carries the post-translational modification Asymmetric dimethylarginine; by autocatalysis. In terms of domain architecture, SAM-dependent MTase PRMT-type spans 73-394 (RDYYFDSYAH…TSVSNDYKMR (322 aa)). Residues His-86, Arg-95, Gly-119, 119-122 (GSGT), Glu-141, and Glu-170 each bind S-adenosyl-L-methionine. Active-site residues include Glu-185 and Glu-194.

This sequence belongs to the class I-like SAM-binding methyltransferase superfamily. Protein arginine N-methyltransferase family. PRMT8 subfamily. As to quaternary structure, homodimer. Tetramer; individual homodimers associates to form a homotetramer. Homooctamer; individual homodimers associates to form a homooctamer and homooligomerization is required for proper localization to the cell membrane. Heterodimer with PRMT1; heterodimerization may recruit PRMT1 activity to the plasma membrane. Interacts with PRMT2 (via the SH3 domain). Interacts with FYN (via the SH3 domain). Interacts with EWS; independently of EWS methylation status. In terms of tissue distribution, brain-specific.

Its subcellular location is the cell membrane. The catalysed reaction is L-arginyl-[protein] + S-adenosyl-L-methionine = N(omega)-methyl-L-arginyl-[protein] + S-adenosyl-L-homocysteine + H(+). It carries out the reaction L-arginyl-[protein] + 2 S-adenosyl-L-methionine = N(omega),N(omega)-dimethyl-L-arginyl-[protein] + 2 S-adenosyl-L-homocysteine + 2 H(+). Functionally, S-adenosyl-L-methionine-dependent and membrane-associated arginine methyltransferase that can both catalyze the formation of omega-N monomethylarginine (MMA) and asymmetrical dimethylarginine (aDMA) in proteins such as NIFK, myelin basic protein, histone H4, H2A and H2A/H2B dimer. Able to mono- and dimethylate EWS protein; however its precise role toward EWS remains unclear as it still interacts with fully methylated EWS. In Homo sapiens (Human), this protein is Protein arginine N-methyltransferase 8.